The sequence spans 301 residues: Nitric oxide synthase-interacting protein (301 aa).

A Phosphoserine modification is found at Ser-36. The interval 55 to 75 (DPVVTPDGYLYEREAILEYIL) is U-box-like. The Nuclear localization signal signature appears at 78–101 (KREIARQVKAYEKQRGARREEQKE). The disordered stretch occupies residues 131–154 (PKAATLPNTEGEQPGPSVGPVGKD).

It belongs to the NOSIP family. As to quaternary structure, interacts with NOS1 and NOS3. Interacts with PP2A holoenzyme, containing PPP2CA, PPP2CB, PPP2R1A and PPP2R2A subunits.

The protein localises to the cytoplasm. It is found in the nucleus. The enzyme catalyses S-ubiquitinyl-[E2 ubiquitin-conjugating enzyme]-L-cysteine + [acceptor protein]-L-lysine = [E2 ubiquitin-conjugating enzyme]-L-cysteine + N(6)-ubiquitinyl-[acceptor protein]-L-lysine.. Its pathway is protein modification; protein ubiquitination. E3 ubiquitin-protein ligase that is essential for proper development of the forebrain, the eye and the face. Catalyzes monoubiquitination of serine/threonine-protein phosphatase 2A (PP2A) catalytic subunit PPP2CA/PPP2CB. Negatively regulates nitric oxide production by inducing NOS1 and NOS3 translocation to actin cytoskeleton and inhibiting their enzymatic activity. This chain is Nitric oxide synthase-interacting protein (Nosip), found in Mus musculus (Mouse).